Reading from the N-terminus, the 593-residue chain is Maternal uncoordinated protein 2 (593 aa).

Belongs to the SCC4/mau-2 family. May heterodimerize with scc-2/SCC2 to form the cohesin loading complex.

Its subcellular location is the nucleus. The protein resides in the nucleoplasm. It is found in the cytoplasm. In terms of biological role, plays an important role in the loading of the cohesin complex on to DNA. Forms a heterodimeric complex (also known as cohesin loading complex) with scc-2/SCC2 which mediates the loading of the cohesin complex onto chromatin. Required for normal development until the fourth larval stage. Functions cell autonomously to guide migrations during the development of the nervous system. Participates in the guidance of mechanosensory neuron AVM by a slt-1-independent mechanism. Regulates chromosome segregation in early embryos. The protein is Maternal uncoordinated protein 2 of Caenorhabditis elegans.